A 397-amino-acid polypeptide reads, in one-letter code: MERFKKASSIIETLKQQGHEAYFVGGSVRDLIIDRPIGDIDIATSALPEEVMAIFPRHVPVGLEHGTVIVVENGEPYEVTTFRTESEYEDFRRPSSVQFVRSLEEDLKRRDFTMNAIAMTEEGKMVDLFAGQEAIQKREIVTVGNAADRFQEDALRMMRGIRFVSTLGFSLETKTKQAIETYGHLLEHIAIERITVEFEKLLTGTYCVKALKELVETKLFSHLPYLQMSEEKLLKATQYKWDSFEADIEAWAFFLYCIGEEHPAVFLRQWKFSNKKIKDIVAVLLTIRKRKEKDWDTVFLYKTGIHIAEMAERVYEAMIESYDHTAVNRVQTLFQALPIKNRQEMNVTGNDLLNWASKKPGPWVAEMIQKIEEAIVQGNVVNEKECIREWLQECNLL.

2 residues coordinate ATP: G26 and R29. Residues G26 and R29 each coordinate CTP. The Mg(2+) site is built by D39 and D41. R110, D153, R156, R159, and R162 together coordinate ATP. Residues R110, D153, R156, R159, and R162 each contribute to the CTP site.

This sequence belongs to the tRNA nucleotidyltransferase/poly(A) polymerase family. Bacterial CCA-adding enzyme type 3 subfamily. Homodimer. Mg(2+) serves as cofactor.

It catalyses the reaction a tRNA precursor + 2 CTP + ATP = a tRNA with a 3' CCA end + 3 diphosphate. The enzyme catalyses a tRNA with a 3' CCA end + 2 CTP + ATP = a tRNA with a 3' CCACCA end + 3 diphosphate. Catalyzes the addition and repair of the essential 3'-terminal CCA sequence in tRNAs without using a nucleic acid template. Adds these three nucleotides in the order of C, C, and A to the tRNA nucleotide-73, using CTP and ATP as substrates and producing inorganic pyrophosphate. tRNA 3'-terminal CCA addition is required both for tRNA processing and repair. Also involved in tRNA surveillance by mediating tandem CCA addition to generate a CCACCA at the 3' terminus of unstable tRNAs. While stable tRNAs receive only 3'-terminal CCA, unstable tRNAs are marked with CCACCA and rapidly degraded. This chain is CCA-adding enzyme, found in Bacillus cereus (strain AH187).